An 831-amino-acid chain; its full sequence is Multiphosphoryl transfer protein (831 aa).

The HPr domain maps to 1–90 (MLTIQFLCPL…EYIQVRFIDS (90 aa)). Catalysis depends on H15, which acts as the Pros-phosphohistidine intermediate; for HPr activity. Phosphohistidine; by EI is present on H15. Residues 119 to 650 (GNVLASGVGV…AVKSQLRQLD (532 aa)) form a PTS EI region. H298 (tele-phosphohistidine intermediate; for PTS EI activity) is an active-site residue. H298 is modified (phosphohistidine; by autocatalysis). R405 and R441 together coordinate phosphoenolpyruvate. Positions 540 and 564 each coordinate Mg(2+). Phosphoenolpyruvate contacts are provided by residues 563 to 564 (ND) and R574. The active-site Proton donor; for EI activity is the C611. The 144-residue stretch at 685-828 (PLLALENIFV…QSILTLLETE (144 aa)) folds into the PTS EIIA type-2 domain. H747 (tele-phosphohistidine intermediate; for PTS EIIA activity) is an active-site residue. The residue at position 747 (H747) is a Phosphohistidine; by HPr.

Belongs to the PEP-utilizing enzyme family. It depends on Mg(2+) as a cofactor.

Its subcellular location is the cytoplasm. It catalyses the reaction L-histidyl-[protein] + phosphoenolpyruvate = N(pros)-phospho-L-histidyl-[protein] + pyruvate. It carries out the reaction D-fructose(out) + N(pros)-phospho-L-histidyl-[protein] = D-fructose 1-phosphate(in) + L-histidyl-[protein]. Multifunctional protein that includes general (non sugar-specific) and sugar-specific components of the phosphoenolpyruvate-dependent sugar phosphotransferase system (sugar PTS). This major carbohydrate active transport system catalyzes the phosphorylation of incoming sugar substrates concomitantly with their translocation across the cell membrane. The enzyme II FryABC PTS system is involved in fructose transport. The sequence is that of Multiphosphoryl transfer protein (fryA) from Escherichia coli O6:H1 (strain CFT073 / ATCC 700928 / UPEC).